A 195-amino-acid chain; its full sequence is FMN-dependent NADH:quinone oxidoreductase (195 aa).

FMN-binding positions include Ser10, 16 to 18, 91 to 94, and 135 to 138; these read SQS, MYNF, and TRGG.

It belongs to the azoreductase type 1 family. Homodimer. FMN is required as a cofactor.

It catalyses the reaction 2 a quinone + NADH + H(+) = 2 a 1,4-benzosemiquinone + NAD(+). The catalysed reaction is N,N-dimethyl-1,4-phenylenediamine + anthranilate + 2 NAD(+) = 2-(4-dimethylaminophenyl)diazenylbenzoate + 2 NADH + 2 H(+). In terms of biological role, quinone reductase that provides resistance to thiol-specific stress caused by electrophilic quinones. Its function is as follows. Also exhibits azoreductase activity. Catalyzes the reductive cleavage of the azo bond in aromatic azo compounds to the corresponding amines. This Vibrio vulnificus (strain YJ016) protein is FMN-dependent NADH:quinone oxidoreductase.